We begin with the raw amino-acid sequence, 187 residues long: Serine/arginine-rich splicing factor RSZ21 (187 aa).

An RRM domain is found at 2–73 (TRVYVGNLDP…WRVELSHKDK (72 aa)). Disordered regions lie at residues 68–89 (LSHK…IEDS) and 105–187 (RRGR…ANGV). Residues 89–106 (SKCYECGELGHFARECRR) form a CCHC-type zinc finger. Residues 107–122 (GRGSVRRRSPSPRRRR) show a composition bias toward basic residues. Phosphoserine is present on residues Ser-123, Ser-132, Ser-134, Ser-140, Ser-146, and Ser-159. Residues 136–155 (RGRRSPPRRRSVTPPRRGRS) show a composition bias toward basic residues. Over residues 165 to 177 (SRRDSPRRRDSPY) the composition is skewed to basic and acidic residues. Low complexity predominate over residues 178-187 (GRRSPYANGV). Ser-181 is subject to Phosphoserine.

The protein belongs to the splicing factor SR family. RSZ subfamily. In terms of assembly, component of the spliceosome. Interacts with SNRNP35, AFC2, CYP59, RS2Z33 and RNU1. Interacts with MOS14. Post-translationally, extensively phosphorylated on serine residues in the RS domain. Phosphorylated by AFC2. In terms of tissue distribution, expressed in roots, leaves, flowers and siliques.

It localises to the nucleus speckle. Probably involved in intron recognition and spliceosome assembly. This is Serine/arginine-rich splicing factor RSZ21 (RSZ21) from Arabidopsis thaliana (Mouse-ear cress).